The following is a 552-amino-acid chain: CTP synthase (552 aa).

Positions 1-267 are amidoligase domain; it reads MAKFIFVTGG…AEQTLKLLRM (267 aa). Serine 13 provides a ligand contact to CTP. Serine 13 serves as a coordination point for UTP. ATP is bound by residues 14–19 and aspartate 71; that span reads SIGKGI. The Mg(2+) site is built by aspartate 71 and glutamate 141. Residues 148–150, 188–193, and lysine 224 contribute to the CTP site; these read DIE and KTKPTQ. UTP is bound by residues 188–193 and lysine 224; that span reads KTKPTQ. Residues 292-534 enclose the Glutamine amidotransferase type-1 domain; that stretch reads DIAIVGKYVQ…IQAAGNHKSQ (243 aa). Glycine 354 contacts L-glutamine. The active-site Nucleophile; for glutamine hydrolysis is the cysteine 381. L-glutamine contacts are provided by residues 382–385, glutamate 405, and arginine 462; that span reads LGMQ. Active-site residues include histidine 507 and glutamate 509. A disordered region spans residues 533–552; sequence SQPISDELDNQSTEMSISLS.

It belongs to the CTP synthase family. In terms of assembly, homotetramer.

The catalysed reaction is UTP + L-glutamine + ATP + H2O = CTP + L-glutamate + ADP + phosphate + 2 H(+). It carries out the reaction L-glutamine + H2O = L-glutamate + NH4(+). It catalyses the reaction UTP + NH4(+) + ATP = CTP + ADP + phosphate + 2 H(+). It participates in pyrimidine metabolism; CTP biosynthesis via de novo pathway; CTP from UDP: step 2/2. With respect to regulation, allosterically activated by GTP, when glutamine is the substrate; GTP has no effect on the reaction when ammonia is the substrate. The allosteric effector GTP functions by stabilizing the protein conformation that binds the tetrahedral intermediate(s) formed during glutamine hydrolysis. Inhibited by the product CTP, via allosteric rather than competitive inhibition. Catalyzes the ATP-dependent amination of UTP to CTP with either L-glutamine or ammonia as the source of nitrogen. Regulates intracellular CTP levels through interactions with the four ribonucleotide triphosphates. This is CTP synthase from Picosynechococcus sp. (strain ATCC 27264 / PCC 7002 / PR-6) (Agmenellum quadruplicatum).